The primary structure comprises 333 residues: Phosphate acyltransferase (333 aa).

Belongs to the PlsX family. As to quaternary structure, homodimer. Probably interacts with PlsY.

It is found in the cytoplasm. The enzyme catalyses a fatty acyl-[ACP] + phosphate = an acyl phosphate + holo-[ACP]. It functions in the pathway lipid metabolism; phospholipid metabolism. In terms of biological role, catalyzes the reversible formation of acyl-phosphate (acyl-PO(4)) from acyl-[acyl-carrier-protein] (acyl-ACP). This enzyme utilizes acyl-ACP as fatty acyl donor, but not acyl-CoA. The sequence is that of Phosphate acyltransferase from Pelagibacter ubique (strain HTCC1062).